The chain runs to 80 residues: Diphthamide biosynthesis protein 3 (80 aa).

Positions 4 to 60 (FHDEVEIEDFEFDEEKDVYHYPCPCGDRFEIPREMLEMGEDVAQCPSCSLLIRVIYD) constitute a DPH-type MB domain. Fe cation-binding residues include Cys-26, Cys-28, Cys-48, and Cys-51.

The protein belongs to the DPH3 family. As to quaternary structure, component of the 2-(3-amino-3-carboxypropyl)histidine synthase complex composed of dph-1, dph-2, dph-3 and a NADH-dependent reductase. Requires Fe(2+) as cofactor.

The catalysed reaction is [3Fe-4S](1+)-[protein] + Fe(2+)-[Dph3] = [3Fe-4S](0)-[protein] + Fe(3+)-[Dph3]. It carries out the reaction 2 [3Fe-4S](0)-[protein] + 2 Fe(2+)-[Dph3] + NADH = 2 [4Fe-4S](1+)-[protein] + 2 [Dph3] + NAD(+) + H(+). The protein operates within protein modification; peptidyl-diphthamide biosynthesis. Required for the first step of diphthamide biosynthesis, a post-translational modification of histidine which occurs in elongation factor 2. Dph-1 and dph-2 transfer a 3-amino-3-carboxypropyl (ACP) group from S-adenosyl-L-methionine (SAM) to a histidine residue, the reaction is assisted by a reduction system comprising dph-3 and a NADH-dependent reductase. Acts as an electron donor to reduce the Fe-S cluster in dph1-dph2 keeping the [4Fe-4S] clusters in the active and reduced state. Restores iron to dph-1-dph-2 iron-sulfur clusters which have degraded from [4Fe-4S] to [3Fe-4S] by donating an iron atom to reform [4Fe-4S] clusters, in a manner dependent on the presence of elongation factor 2 and SAM. Associates with the elongator complex and is required for tRNA Wobble base modifications mediated by the elongator complex. The elongator complex is required for multiple tRNA modifications, including mcm5U (5-methoxycarbonylmethyl uridine), mcm5s 2U (5-methoxycarbonylmethyl-2-thiouridine), and ncm5U (5-carbamoylmethyl uridine). This is Diphthamide biosynthesis protein 3 from Caenorhabditis elegans.